A 119-amino-acid polypeptide reads, in one-letter code: DNA-binding protein Maeo_0998 (119 aa).

The segment covering 1–11 has biased composition (basic and acidic residues); sequence MDIEEIKRQKM. Residues 1–36 form a disordered region; it reads MDIEEIKRQKMMELQQQQAQGAPNPEEIQQQQEQER. The span at 15–32 shows a compositional bias: low complexity; sequence QQQQAQGAPNPEEIQQQQ.

This sequence belongs to the PDCD5 family.

This Methanococcus aeolicus (strain ATCC BAA-1280 / DSM 17508 / OCM 812 / Nankai-3) protein is DNA-binding protein Maeo_0998.